Reading from the N-terminus, the 914-residue chain is Protein ECT2 (914 aa).

Position 2 is an N-acetylalanine (Ala2). BRCT domains lie at 171–260 (LYCT…AAVD) and 266–354 (FKVP…MYLY). Position 359 is a phosphothreonine; by PKC/PRKCI (Thr359). Phosphoserine occurs at positions 367 and 370. At Thr373 the chain carries Phosphothreonine; by CDK1. Position 376 is a phosphoserine (Ser376). Short sequence motifs (nuclear localization signal) lie at residues 378-382 (RKRRR) and 401-405 (PRKRP). Positions 388-449 (AQLSRETDVS…SKSSTPVPSK (62 aa)) are disordered. Residues 418 to 429 (DISNTPESSINY) show a composition bias toward polar residues. Positions 432-449 (TPKSCTKSSKSSTPVPSK) are enriched in low complexity. Thr444 is subject to Phosphothreonine; by CDK1. A DH domain is found at 452–641 (ARWQVAKELY…KEVMTHINED (190 aa)). Lys611 is covalently cross-linked (Glycyl lysine isopeptide (Lys-Gly) (interchain with G-Cter in SUMO2)). The PH domain maps to 675 to 794 (RVETISLGEH…KMLCRHVANT (120 aa)). Ser716 and Ser842 each carry phosphoserine. Thr846 carries the post-translational modification Phosphothreonine; by CDK1. Positions 857 to 884 (TSHGSVEGRSPSSNDKHVMSRLSSTSSL) are disordered. A phosphoserine mark is found at Ser861 and Ser866.

In terms of assembly, homodimer. Homooligomer. Found in the centralspindlin complex. Interacts with NR1I3. Interacts (Thr-359 phosphorylated form) with PARD6A; the interaction is observed in cancer cells. Interacts (Thr-359 phosphorylated form) with PRKCI; the interaction is observed in cancer cells. Interacts with PKP4; the interaction is observed at the midbody. Interacts with RACGAP1/CYK4; the interaction is direct, occurs in a microtubule-dependent manner, occurs at anaphase and during cytokinesis, is inhibited in metaphase by phosphorylation of ECT2 on Thr-373 and is stimulated in early anaphase by dephosphorylation of ECT2 probably on Thr-373 through CDK1 activity. Interacts with PLK1; the interaction is stimulated upon its phosphorylation on Thr-444. Interacts with RHOA; the interaction results in allosteric activation of ECT2. Interacts with KIF23, PARD3, PARD6B and PRKCQ. Interacts with NEDD9/HEF1. Post-translationally, phosphorylated by PLK1 in vitro. Hyperphosphorylated during the G2 phase of the cell cycle. Phosphorylation at Thr-373 occurs during the G2/M phase, relieves its auto-inhibition status and stimulates its GEF activity. Phosphorylation at Thr-444 in G2/M phase is required for subsequent binding with PLK1 and Rho exchange activation. Dephosphorylated at the time of cytokinesis. Phosphorylation at Thr-359 is required for its transformation activity in cancer cells. As to expression, expressed in lung epithelial cells (at protein level). Expressed in squamous cell carcinoma, primary non-small cell lung cancer tumors and lung adenocarcinoma.

Its subcellular location is the nucleus. The protein localises to the cytoplasm. It localises to the cytoskeleton. The protein resides in the spindle. It is found in the cleavage furrow. Its subcellular location is the midbody. The protein localises to the cell junction. It localises to the tight junction. The protein resides in the microtubule organizing center. It is found in the centrosome. With respect to regulation, autoinhibited by the C-terminal PH domain which folds back and binds to the surface of the DH domain, blocking binding of RHOA to the catalytic center of the DH domain. The 2nd BRCT domain is also involved in inhibition, probably by helping to impede RHOA binding. Allosterically activated by binding of activated GTP-bound RHOA to the PH domain which stimulates the release of PH inhibition and promotes the binding of substrate RHOA to the catalytic center. Binding of phosphorylated RACGAP1 to the N-terminal BRCT domain-containing region also releases autoinhibition. Its function is as follows. Guanine nucleotide exchange factor (GEF) that catalyzes the exchange of GDP for GTP. Promotes guanine nucleotide exchange on the Rho family members of small GTPases, like RHOA, RHOC, RAC1 and CDC42. Required for signal transduction pathways involved in the regulation of cytokinesis. Component of the centralspindlin complex that serves as a microtubule-dependent and Rho-mediated signaling required for the myosin contractile ring formation during the cell cycle cytokinesis. Regulates the translocation of RHOA from the central spindle to the equatorial region. Plays a role in the control of mitotic spindle assembly; regulates the activation of CDC42 in metaphase for the process of spindle fibers attachment to kinetochores before chromosome congression. Involved in the regulation of epithelial cell polarity; participates in the formation of epithelial tight junctions in a polarity complex PARD3-PARD6-protein kinase PRKCQ-dependent manner. Plays a role in the regulation of neurite outgrowth. Inhibits phenobarbital (PB)-induced NR1I3 nuclear translocation. Stimulates the activity of RAC1 through its association with the oncogenic PARD6A-PRKCI complex in cancer cells, thereby acting to coordinately drive tumor cell proliferation and invasion. Also stimulates genotoxic stress-induced RHOB activity in breast cancer cells leading to their cell death. This is Protein ECT2 from Homo sapiens (Human).